The chain runs to 545 residues: MGNYYSCGASSTSSPTSPSLVDYYYCYHRYPSSCSSTSTATSSGGRMPIRSHQQRLSSPTAVLGHETPALREVYTVGRKLGQGQFGTTYLCTQVSTGAEYACKSIAKRKLLSPEDVEDVRREIQIMHHLAGHGSVVTIQGAYEDNLYVHIVMELCEGGELFDRIVERGYFSERKAAEITRVIVGVVEACHSLGVMHRDLKPENFLLKESSSSSSLKAIDFGLSVFFKPGQVFSDVVGSPYYVAPEVLCKHYGPEADVWTAGVIVYILLSGVPPFWAETQQGIFDAVLRGSLDFDSDPWPTISDSAKDLIRRMLRSPPRERLTAHQVLCHPWVCDDGVAPDRPLAPAVLSRLKQFSAMNRLKKMALRVIARNLSEEELAGLKEMFKAMDTDASGAITFDELKEGLRRYGSNLREAEIRDLMDAADVDKSGTIDYDEFIAATVHLNKLEREEHLLAAFAYFDRDGSGYITVDELEHACRDHNMADVGIDDIIREVDQDNDGRIDYGEFVAMMKKGAIDIIGNGRLTIGRPTTATSDDPSPTISSSSR.

Gly-2 is lipidated: N-myristoyl glycine. Positions 34–43 (CSSTSTATSS) are enriched in low complexity. Positions 34-58 (CSSTSTATSSGGRMPIRSHQQRLSS) are disordered. The Protein kinase domain maps to 74–332 (YTVGRKLGQG…AHQVLCHPWV (259 aa)). ATP contacts are provided by residues 80 to 88 (LGQGQFGTT) and Lys-103. The Proton acceptor role is filled by Asp-198. The autoinhibitory domain stretch occupies residues 338-368 (APDRPLAPAVLSRLKQFSAMNRLKKMALRVI). EF-hand domains lie at 375 to 410 (EELAGLKEMFKAMDTDASGAITFDELKEGLRRYGSN), 411 to 446 (LREAEIRDLMDAADVDKSGTIDYDEFIAATVHLNKL), 447 to 482 (EREEHLLAAFAYFDRDGSGYITVDELEHACRDHNMA), and 486 to 516 (IDDIIREVDQDNDGRIDYGEFVAMMKKGAID). 19 residues coordinate Ca(2+): Asp-388, Asp-390, Ser-392, Glu-399, Asp-424, Asp-426, Ser-428, Thr-430, Glu-435, Asp-460, Asp-462, Ser-464, Tyr-466, Glu-471, Asp-494, Asp-496, Asp-498, Arg-500, and Glu-505. Residues 526–545 (GRPTTATSDDPSPTISSSSR) form a disordered region. The span at 528–545 (PTTATSDDPSPTISSSSR) shows a compositional bias: low complexity.

This sequence belongs to the protein kinase superfamily. Ser/Thr protein kinase family. CDPK subfamily.

The protein localises to the membrane. The catalysed reaction is L-seryl-[protein] + ATP = O-phospho-L-seryl-[protein] + ADP + H(+). The enzyme catalyses L-threonyl-[protein] + ATP = O-phospho-L-threonyl-[protein] + ADP + H(+). Its activity is regulated as follows. Activated by calcium. Autophosphorylation may play an important role in the regulation of the kinase activity. Functionally, may play a role in signal transduction pathways that involve calcium as a second messenger. In Oryza sativa subsp. japonica (Rice), this protein is Calcium-dependent protein kinase 6.